We begin with the raw amino-acid sequence, 156 residues long: Large ribosomal subunit protein eL24 (156 aa).

Residues 87 to 156 are disordered; it reads LELIKERRSQ…AFQKVHATSR (70 aa). Over residues 89–129 the composition is skewed to basic and acidic residues; that stretch reads LIKERRSQKPSDRKAARDVKLAKDKEAKKADKAARKAEKAK. Positions 130–147 are enriched in low complexity; that stretch reads SAAAGAQSKVSKQQSKGA.

Belongs to the eukaryotic ribosomal protein eL24 family.

In Debaryomyces hansenii (strain ATCC 36239 / CBS 767 / BCRC 21394 / JCM 1990 / NBRC 0083 / IGC 2968) (Yeast), this protein is Large ribosomal subunit protein eL24 (RPL24).